The sequence spans 153 residues: SsrA-binding protein (153 aa).

This sequence belongs to the SmpB family.

The protein resides in the cytoplasm. Functionally, required for rescue of stalled ribosomes mediated by trans-translation. Binds to transfer-messenger RNA (tmRNA), required for stable association of tmRNA with ribosomes. tmRNA and SmpB together mimic tRNA shape, replacing the anticodon stem-loop with SmpB. tmRNA is encoded by the ssrA gene; the 2 termini fold to resemble tRNA(Ala) and it encodes a 'tag peptide', a short internal open reading frame. During trans-translation Ala-aminoacylated tmRNA acts like a tRNA, entering the A-site of stalled ribosomes, displacing the stalled mRNA. The ribosome then switches to translate the ORF on the tmRNA; the nascent peptide is terminated with the 'tag peptide' encoded by the tmRNA and targeted for degradation. The ribosome is freed to recommence translation, which seems to be the essential function of trans-translation. In Orientia tsutsugamushi (strain Ikeda) (Rickettsia tsutsugamushi), this protein is SsrA-binding protein.